The following is a 429-amino-acid chain: Adenylosuccinate synthetase (429 aa).

Residues 12–18 (GDEGKGK) and 40–42 (GHT) contribute to the GTP site. Asp-13 serves as the catalytic Proton acceptor. Residues Asp-13 and Gly-40 each coordinate Mg(2+). IMP contacts are provided by residues 13–16 (DEGK), 38–41 (NAGH), Thr-129, Arg-143, Gln-223, Thr-238, and Arg-302. The active-site Proton donor is the His-41. 298–304 (VVTGRKR) contacts substrate. GTP contacts are provided by residues Arg-304, 330-332 (KLD), and 412-414 (STS).

Belongs to the adenylosuccinate synthetase family. Homodimer. Mg(2+) is required as a cofactor.

The protein localises to the cytoplasm. The enzyme catalyses IMP + L-aspartate + GTP = N(6)-(1,2-dicarboxyethyl)-AMP + GDP + phosphate + 2 H(+). The protein operates within purine metabolism; AMP biosynthesis via de novo pathway; AMP from IMP: step 1/2. Plays an important role in the de novo pathway of purine nucleotide biosynthesis. Catalyzes the first committed step in the biosynthesis of AMP from IMP. In Bartonella tribocorum (strain CIP 105476 / IBS 506), this protein is Adenylosuccinate synthetase.